The primary structure comprises 671 residues: DNA ligase (671 aa).

NAD(+) contacts are provided by residues D32–D36, S81–L82, and E113. K115 acts as the N6-AMP-lysine intermediate in catalysis. Residues R136, E173, K290, and K314 each coordinate NAD(+). 4 residues coordinate Zn(2+): C408, C411, C426, and C432. Residues E593–S671 form the BRCT domain.

It belongs to the NAD-dependent DNA ligase family. LigA subfamily. Requires Mg(2+) as cofactor. Mn(2+) is required as a cofactor.

The enzyme catalyses NAD(+) + (deoxyribonucleotide)n-3'-hydroxyl + 5'-phospho-(deoxyribonucleotide)m = (deoxyribonucleotide)n+m + AMP + beta-nicotinamide D-nucleotide.. DNA ligase that catalyzes the formation of phosphodiester linkages between 5'-phosphoryl and 3'-hydroxyl groups in double-stranded DNA using NAD as a coenzyme and as the energy source for the reaction. It is essential for DNA replication and repair of damaged DNA. The chain is DNA ligase from Shigella dysenteriae serotype 1 (strain Sd197).